Consider the following 187-residue polypeptide: Large ribosomal subunit protein bL17 (187 aa).

Residues 122–187 form a disordered region; that stretch reads PKVRSSRTST…EADAAEKSDK (66 aa). Residues 127–144 are compositionally biased toward low complexity; it reads SRTSTATAPVAAAPVAEA. Acidic residues predominate over residues 145–157; the sequence is PAEESDVPVEETD. Low complexity predominate over residues 167 to 176; the sequence is AETTDAAAAE.

The protein belongs to the bacterial ribosomal protein bL17 family. As to quaternary structure, part of the 50S ribosomal subunit. Contacts protein L32.

The chain is Large ribosomal subunit protein bL17 from Clavibacter sepedonicus (Clavibacter michiganensis subsp. sepedonicus).